The primary structure comprises 186 residues: Inner membrane-spanning protein YciB (186 aa).

6 helical membrane passes run 3–23 (FLFDLFPVILFFAAFKVAGIY), 24–44 (VATTVAMVATVAQIAWVWFKH), 49–69 (AMQWLSLLIIVVFGGATLIFH), 76–96 (WKPTVLYWMFGVVLLGSAVLL), 121–141 (LVWSLFFLAMGGLNLYVAYHF), and 149–169 (FKLFGSMGLMVVFILVQSVWL).

It belongs to the YciB family.

The protein resides in the cell inner membrane. Plays a role in cell envelope biogenesis, maintenance of cell envelope integrity and membrane homeostasis. In Ralstonia nicotianae (strain ATCC BAA-1114 / GMI1000) (Ralstonia solanacearum), this protein is Inner membrane-spanning protein YciB.